The chain runs to 197 residues: MLQHIRPAFISLILFTLLFGLIYPLTVTGIAQFVFPDQASGSLIFQGDQVVGSRLIGQAFHRPEYLHPRPSIAGDGYDASASSGSNLGPLNPDLVKQVTERAAAIRVENQDQEAVIPADAVTASGSGLDPEISPAYAGLQAKRVASARAMPVVEVERIVAENTQPAFLGFIGQPRVNVLAVNLALDARFPIQRPPMP.

A helical transmembrane segment spans residues 7–27; that stretch reads PAFISLILFTLLFGLIYPLTV.

This sequence belongs to the KdpC family. In terms of assembly, the system is composed of three essential subunits: KdpA, KdpB and KdpC.

Its subcellular location is the cell inner membrane. Part of the high-affinity ATP-driven potassium transport (or Kdp) system, which catalyzes the hydrolysis of ATP coupled with the electrogenic transport of potassium into the cytoplasm. This subunit acts as a catalytic chaperone that increases the ATP-binding affinity of the ATP-hydrolyzing subunit KdpB by the formation of a transient KdpB/KdpC/ATP ternary complex. This chain is Potassium-transporting ATPase KdpC subunit, found in Beijerinckia indica subsp. indica (strain ATCC 9039 / DSM 1715 / NCIMB 8712).